The primary structure comprises 591 residues: Pentatricopeptide repeat-containing protein At3g47530 (591 aa).

PPR repeat units follow at residues 76–110, 112–146, 147–177, 178–208, 216–250, 251–281, 282–316, 317–351, and 354–384; these read TLSHCNTMIRAFSLSQTPCEGFRLFRSLRRNSSLP, NPLSSSFALKCCIKSGDLLGGLQIHGKIFSDGFLS, DSLLMTTLMDLYSTCENSTDACKVFDEIPKR, DTVSWNVLFSCYLRNKRTRDVLVLFDKMKND, DGVTCLLALQACANLGALDFGKQVHDFIDENGLSG, ALNLSNTLVSMYSRCGSMDKAYQVFYGMRER, NVVSWTALISGLAMNGFGKEAIEAFNEMLKFGISP, EEQTLTGLLSACSHSGLVAEGMMFFDRMRSGEFKI, and NLHHYGCVVDLLGRARLLDKAYSLIKSMEMK. A type E motif region spans residues 389–464; it reads IWRTLLGACR…KPGCSAIELQ (76 aa). A type E(+) motif region spans residues 465 to 495; sequence GTVHEFIVDDVSHPRKEEIYKMLAEINQQLK. The tract at residues 496-591 is type DYW motif; sequence IAGYVAEITS…GGSCSCNDFW (96 aa).

Belongs to the PPR family. PCMP-H subfamily.

This Arabidopsis thaliana (Mouse-ear cress) protein is Pentatricopeptide repeat-containing protein At3g47530 (PCMP-H76).